A 291-amino-acid chain; its full sequence is Elongation factor Ts (291 aa).

An involved in Mg(2+) ion dislocation from EF-Tu region spans residues 79–82; it reads TDFV.

It belongs to the EF-Ts family.

The protein localises to the cytoplasm. Its function is as follows. Associates with the EF-Tu.GDP complex and induces the exchange of GDP to GTP. It remains bound to the aminoacyl-tRNA.EF-Tu.GTP complex up to the GTP hydrolysis stage on the ribosome. The polypeptide is Elongation factor Ts (Anaplasma marginale (strain St. Maries)).